A 470-amino-acid polypeptide reads, in one-letter code: Calcitonin gene-related peptide type 1 receptor (470 aa).

The signal sequence occupies residues 1–23 (MTASCWTICLFLLGSVTEFIVLA). At 24 to 147 (SPEVNESQQQ…HTTEGRRTAM (124 aa)) the chain is on the extracellular side. Residues asparagine 28, asparagine 74, asparagine 126, and asparagine 131 are each glycosylated (N-linked (GlcNAc...) asparagine). 3 cysteine pairs are disulfide-bonded: cysteine 56–cysteine 82, cysteine 73–cysteine 113, and cysteine 96–cysteine 135. The helical transmembrane segment at 148 to 172 (NLFYLALIGHGLSLTSLFISLGIFF) threads the bilayer. Residues 173 to 183 (HFKSLSCQRIT) lie on the Cytoplasmic side of the membrane. A helical membrane pass occupies residues 184–206 (LHKNLFFSFVLNSIITIIWLTAV). Residues 207–217 (ANNQELVQQNP) are Extracellular-facing. A helical transmembrane segment spans residues 218–246 (ISCKISQFIHLYIFGCNYFWMLCEGIYLH). The Cytoplasmic portion of the chain corresponds to 247 to 260 (TLIVVAVFAEKQHL). Residues 261–281 (MWYYLLGWGFPLIPATIHAVA) form a helical membrane-spanning segment. The Extracellular portion of the chain corresponds to 282-297 (RSYYYNDNCWISSNTS). N-linked (GlcNAc...) asparagine glycosylation occurs at asparagine 295. Residues 298–322 (LLYIIHGPICAAMLVNLFFLLNIVR) form a helical membrane-spanning segment. The Cytoplasmic portion of the chain corresponds to 323-337 (VLITKLKVTHQAKSS). Residues 338 to 359 (LYMKAVRATLILVPLLGIQYVL) form a helical membrane-spanning segment. The Extracellular portion of the chain corresponds to 360–374 (LPYKPSGRVSAEIYD). The chain crosses the membrane as a helical span at residues 375 to 395 (YIMHILMHYQGLLVATIFCFF). At 396 to 470 (NGEVQAVLRR…AIIKPENPFA (75 aa)) the chain is on the cytoplasmic side.

This sequence belongs to the G-protein coupled receptor 2 family.

The protein localises to the cell membrane. May function as G protein-coupled receptor for calcitonin-gene-related peptides and adrenomedullin. Specificity may be modulated by accessory proteins. May activate cAMP-dependent pathway. This Danio rerio (Zebrafish) protein is Calcitonin gene-related peptide type 1 receptor (calcrla).